We begin with the raw amino-acid sequence, 143 residues long: Small ribosomal subunit protein bS6 (143 aa).

The segment at 96–143 (VTEASPMAAAKEERRDDRREVKKDVAAAPVEAKEDSVEEKSEEAASEE) is disordered. A compositionally biased stretch (basic and acidic residues) spans 105 to 143 (AKEERRDDRREVKKDVAAAPVEAKEDSVEEKSEEAASEE).

Belongs to the bacterial ribosomal protein bS6 family.

In terms of biological role, binds together with bS18 to 16S ribosomal RNA. This Colwellia psychrerythraea (strain 34H / ATCC BAA-681) (Vibrio psychroerythus) protein is Small ribosomal subunit protein bS6.